Here is a 631-residue protein sequence, read N- to C-terminus: Polycomb group protein EMBRYONIC FLOWER 2 (631 aa).

The C2H2-type zinc finger occupies 324-347 (FSCPFCLVKCASFKGLRYHLPSTH). Basic and acidic residues predominate over residues 424–446 (DDAHSVRSEKSRIPPGKHYERIG). Residues 424 to 465 (DDAHSVRSEKSRIPPGKHYERIGGAESGQRVPPGTSPADVQS) are disordered. A VEFS-box region spans residues 505-583 (RQFFHSHRAQ…GHIPWACEAF (79 aa)).

The protein belongs to the VEFS (VRN2-EMF2-FIS2-SU(Z)12) family. In terms of assembly, in plants, PcG complexes are probably composed of a member of the EZ family (CLF or MEA), FIE, and a member of the VEFS family (FIS2, VRN2 or EMF2). Binds to ALP1. As to expression, widely expressed throughout the life cycle with higher levels in proliferating tissues. Expressed in both vegetative and the reproductive shoot meristems.

It localises to the nucleus. Polycomb group (PcG) protein. Involved in flowering processes by repressing unknown target genes and preventing reproductive development. Participates in polycomb group (PcG) protein complex-mediated (probably in complex with EMF1) silencing of the flower homeotic genes AGAMOUS (AG), PISTILLATA (PI), and APETALA3 (AP3), as well as of some regulatory genes such as ABSCISIC ACID INSENSITIVE3 (ABI3), LONG VEGETATIVE PHASE1 (LOV1), and FLOWERING LOCUS C (FLC) during vegetative development, by mediating trimethylation of histone 3 lysine 27 on the AG chromatin (H3K27me3). PcG proteins act by forming multiprotein complexes, which are required to maintain the transcriptionally repressive state of homeotic genes throughout development. PcG proteins are not required to initiate repression, but to maintain it during later stages of development. They probably act via the methylation of histones, rendering chromatin heritably changed in its expressibility. The protein is Polycomb group protein EMBRYONIC FLOWER 2 (EMF2) of Arabidopsis thaliana (Mouse-ear cress).